The sequence spans 248 residues: Anamorsin homolog (248 aa).

The N-terminal SAM-like domain stretch occupies residues 4 to 129; the sequence is FKGLQKSLYI…ETGSSARLSF (126 aa). Positions 130 to 161 are linker; sequence AKKNASAVNVWKISGDDEELIDEEELLDEEDK. [2Fe-2S] cluster-binding residues include Cys172, Cys181, Cys184, and Cys186. Positions 172-186 are fe-S binding site A; that stretch reads CSTTGKRKACKNCSC. Cys209, Cys212, Cys220, and Cys223 together coordinate [4Fe-4S] cluster. 2 consecutive short sequence motifs (cx2C motif) follow at residues 209 to 212 and 220 to 223; these read CGNC and CSTC. The interval 209–223 is fe-S binding site B; it reads CGNCYLGDAFRCSTC.

It belongs to the anamorsin family. Monomer. The cofactor is [2Fe-2S] cluster. It depends on [4Fe-4S] cluster as a cofactor.

Its subcellular location is the cytoplasm. The protein localises to the mitochondrion intermembrane space. In terms of biological role, component of the cytosolic iron-sulfur (Fe-S) protein assembly (CIA) machinery. Required for the maturation of extramitochondrial Fe-S proteins. Part of an electron transfer chain functioning in an early step of cytosolic Fe-S biogenesis, facilitating the de novo assembly of a [4Fe-4S] cluster on the cytosolic Fe-S scaffold complex. Electrons are transferred from NADPH via a FAD- and FMN-containing diflavin oxidoreductase. Together with the diflavin oxidoreductase, also required for the assembly of the diferric tyrosyl radical cofactor of ribonucleotide reductase (RNR), probably by providing electrons for reduction during radical cofactor maturation in the catalytic small subunit. The sequence is that of Anamorsin homolog from Drosophila melanogaster (Fruit fly).